Consider the following 431-residue polypeptide: Isochorismate synthase MenF (431 aa).

The active-site Proton acceptor is the Lys-190. Glu-240 serves as the catalytic Proton donor. Glu-284 and Glu-416 together coordinate Mg(2+).

It belongs to the isochorismate synthase family. As to quaternary structure, homodimer. Mg(2+) is required as a cofactor.

It carries out the reaction chorismate = isochorismate. The protein operates within quinol/quinone metabolism; 1,4-dihydroxy-2-naphthoate biosynthesis; 1,4-dihydroxy-2-naphthoate from chorismate: step 1/7. It functions in the pathway quinol/quinone metabolism; menaquinone biosynthesis. Functionally, catalyzes the conversion of chorismate to isochorismate. Can also catalyze the reverse reaction, but with a lower efficiency. The chain is Isochorismate synthase MenF from Escherichia coli (strain K12).